A 500-amino-acid chain; its full sequence is 4-aminobutyrate aminotransferase, mitochondrial (500 aa).

The N-terminal 28 residues, 1–28 (MASMLVAQRLACSFQHSYRLLVPGSRHI), are a transit peptide targeting the mitochondrion. Residue C163 participates in [2Fe-2S] cluster binding. 164 to 165 (GS) lines the pyridoxal 5'-phosphate pocket. C166 provides a ligand contact to [2Fe-2S] cluster. R220 lines the substrate pocket. N6-succinyllysine is present on K231. K252 bears the N6-acetyllysine; alternate mark. The residue at position 252 (K252) is an N6-succinyllysine; alternate. An N6-acetyllysine mark is found at K279 and K318. Residue K357 is modified to N6-(pyridoxal phosphate)lysine. T381 is a pyridoxal 5'-phosphate binding site. K413 carries the post-translational modification N6-acetyllysine; alternate. K413 bears the N6-succinyllysine; alternate mark. N6-acetyllysine occurs at positions 452 and 470.

It belongs to the class-III pyridoxal-phosphate-dependent aminotransferase family. In terms of assembly, homodimer; disulfide-linked. It depends on pyridoxal 5'-phosphate as a cofactor. [2Fe-2S] cluster serves as cofactor.

The protein resides in the mitochondrion matrix. The enzyme catalyses 4-aminobutanoate + 2-oxoglutarate = succinate semialdehyde + L-glutamate. It carries out the reaction (S)-3-amino-2-methylpropanoate + 2-oxoglutarate = 2-methyl-3-oxopropanoate + L-glutamate. Functionally, catalyzes the conversion of gamma-aminobutyrate and L-beta-aminoisobutyrate to succinate semialdehyde and methylmalonate semialdehyde, respectively. Can also convert delta-aminovalerate and beta-alanine. This Bos taurus (Bovine) protein is 4-aminobutyrate aminotransferase, mitochondrial (ABAT).